A 227-amino-acid polypeptide reads, in one-letter code: Ribose-5-phosphate isomerase A (227 aa).

Substrate contacts are provided by residues 26–29, 82–85, and 95–98; these read TGST, DGAD, and KGGG. Glu-104 functions as the Proton acceptor in the catalytic mechanism. Lys-122 lines the substrate pocket.

The protein belongs to the ribose 5-phosphate isomerase family. In terms of assembly, homodimer.

The enzyme catalyses aldehydo-D-ribose 5-phosphate = D-ribulose 5-phosphate. Its pathway is carbohydrate degradation; pentose phosphate pathway; D-ribose 5-phosphate from D-ribulose 5-phosphate (non-oxidative stage): step 1/1. In terms of biological role, catalyzes the reversible conversion of ribose-5-phosphate to ribulose 5-phosphate. In Streptococcus pyogenes serotype M2 (strain MGAS10270), this protein is Ribose-5-phosphate isomerase A.